Here is a 148-residue protein sequence, read N- to C-terminus: Large ribosomal subunit protein uL13 (148 aa).

The disordered stretch occupies residues Pro128–Lys148.

It belongs to the universal ribosomal protein uL13 family. Part of the 50S ribosomal subunit.

This protein is one of the early assembly proteins of the 50S ribosomal subunit, although it is not seen to bind rRNA by itself. It is important during the early stages of 50S assembly. The protein is Large ribosomal subunit protein uL13 of Saccharopolyspora erythraea (strain ATCC 11635 / DSM 40517 / JCM 4748 / NBRC 13426 / NCIMB 8594 / NRRL 2338).